The following is a 479-amino-acid chain: Ribosomal RNA small subunit methyltransferase F (479 aa).

S-adenosyl-L-methionine is bound by residues 125–131, E149, D176, and D194; that span reads AAAPGSK. The Nucleophile role is filled by C247.

The protein belongs to the class I-like SAM-binding methyltransferase superfamily. RsmB/NOP family.

It is found in the cytoplasm. The catalysed reaction is cytidine(1407) in 16S rRNA + S-adenosyl-L-methionine = 5-methylcytidine(1407) in 16S rRNA + S-adenosyl-L-homocysteine + H(+). Functionally, specifically methylates the cytosine at position 1407 (m5C1407) of 16S rRNA. In Salmonella paratyphi B (strain ATCC BAA-1250 / SPB7), this protein is Ribosomal RNA small subunit methyltransferase F.